The sequence spans 165 residues: Inorganic pyrophosphatase (165 aa).

The substrate site is built by Lys-21, Arg-35, and Tyr-47. Mg(2+) is bound by residues Asp-57, Asp-62, and Asp-94. Tyr-131 provides a ligand contact to substrate.

The protein belongs to the PPase family. In terms of assembly, homohexamer. Mg(2+) is required as a cofactor.

Its subcellular location is the cytoplasm. The catalysed reaction is diphosphate + H2O = 2 phosphate + H(+). Its function is as follows. Catalyzes the hydrolysis of inorganic pyrophosphate (PPi) forming two phosphate ions. In Geobacillus stearothermophilus (Bacillus stearothermophilus), this protein is Inorganic pyrophosphatase.